An 804-amino-acid chain; its full sequence is Leucine--tRNA ligase (804 aa).

Positions 40 to 51 match the 'HIGH' region motif; it reads PYPSGQGLHVGH. The 'KMSKS' region signature appears at 576–580; the sequence is KMSKS. K579 contributes to the ATP binding site.

This sequence belongs to the class-I aminoacyl-tRNA synthetase family.

Its subcellular location is the cytoplasm. It carries out the reaction tRNA(Leu) + L-leucine + ATP = L-leucyl-tRNA(Leu) + AMP + diphosphate. In Enterococcus faecalis (strain ATCC 700802 / V583), this protein is Leucine--tRNA ligase.